The chain runs to 871 residues: CRISPR system Cmr subunit Cmr2 (871 aa).

Residues 1–215 (MVNIKEKLFV…THLDLTSALS (215 aa)) form a not required for target RNA cleavage region. Positions 13, 14, and 25 each coordinate Mn(2+). Zn(2+)-binding residues include C448, C451, C478, and C481. A GGDEF domain is found at 592 to 752 (KYYAILVMDG…GKDTLAIGLL (161 aa)). The Mn(2+) site is built by D600, E656, D673, D674, E694, and E700.

This sequence belongs to the CRISPR system Cmr2 family. Part of the type III-B Cmr ribonucleoprotein (RNP) complex, an elongated RNP with Cmr2 and Cmr3 as the base, with Cmr4 and Cmr5 forming a helical core along the mature crRNA (39 or 45 nt in length), while the complex is capped by Cmr6 and Cmr1. The 5' end of the crRNA is bound to Cmr2 and Cmr3, while Cmr6 and a Cmr1 subunit (Cmr1-1 or Cmr1-2) cap the 3' end of the crRNA. The target RNA lies antiparallel to the crRNA, with its 5' end near Cmr1 and Cmr6 and its 3' end near Cmr2 and Cmr3; major target cleavage occurs nears the junction of Cmr1/Cmr6 and Cmr4/Cmr, with minor cleavage occurring at 6 nt intervals which coincide with the proposed spacing of Cmr4 subunits. Forms a 1:1 complex with Cmr3. The Cmr2-Cmr3 complex non-specifically binds ss-target RNA and crRNA. Interacts with Cmr3, Cmr4 and Cmr5. Ca(2+) serves as cofactor. The cofactor is Mn(2+). It depends on Zn(2+) as a cofactor.

The protein resides in the cytoplasm. Functionally, CRISPR (clustered regularly interspaced short palindromic repeat), is an adaptive immune system that provides protection against mobile genetic elements (viruses, transposable elements and conjugative plasmids). CRISPR clusters contain sequences complementary to antecedent mobile elements and target invading nucleic acids. CRISPR clusters are transcribed and processed into CRISPR RNA (crRNA), formerly called psiRNA (prokaryotic silencing) in this organism. Part of the Cmr ribonucleoprotein complex which has divalent cation-dependent endoribonuclease activity specific for ssRNA complementary to the crRNA (target RNA), generating 5' hydroxy- and 3' phosphate or 2'-3' cyclic phosphate termini. Cmr4 is probably the subunit that cleaves target RNA. Cmr complex does not cleave ssDNA complementary to the crRNA. Cleavage of target RNA is guided by the crRNA; substrate cleavage occurs a fixed distance (14 nt) from the 3' end of the crRNA. In vitro reconstitution shows Cmr1-2 and Cmr5 are not absolutely necessary for target cleavage. This is CRISPR system Cmr subunit Cmr2 from Pyrococcus furiosus (strain ATCC 43587 / DSM 3638 / JCM 8422 / Vc1).